A 380-amino-acid chain; its full sequence is MPLDPSPTLNSLGFAKPPAETRVVVAMSGGVDSSVVAAMLAEEGYDVVGVTLQLYDHGAALAKKGACCAGLDIHDARRVSEKMGFPHYVLDYENIFKDAVIDEFAESYLGGATPVPCIRCNERVKFKDLLETAKDLDADCMATGHYIQRKSGPYGAELHSAADANRDQSYFLFSTTPEQLAFLRFPLGHLPSKEDTRALAEKYGLSVANKPDSQDICFVPDGDYASVIRKLRPEAAAPGDIVDTDGRVLARHDGVVNYTIGQRRGLGIGGLATPLYVIKLDAEARQVVVGPKSMLSTRTVPVREINWLGDEPFQSRDAWHLAVKVRSTRPPTDAIIRPISDTEATVELTSPEEGISPGQACVFYDTDSSRIYGGGWIHKG.

ATP-binding positions include 26–33 (AMSGGVDS) and Leu-52. Cys-120 acts as the Nucleophile in catalysis. Cys-120 and Cys-217 are joined by a disulfide. Position 144 (Gly-144) interacts with ATP. An interaction with tRNA region spans residues 166-168 (RDQ). Cys-217 serves as the catalytic Cysteine persulfide intermediate.

This sequence belongs to the MnmA/TRMU family.

Its subcellular location is the cytoplasm. The enzyme catalyses S-sulfanyl-L-cysteinyl-[protein] + uridine(34) in tRNA + AH2 + ATP = 2-thiouridine(34) in tRNA + L-cysteinyl-[protein] + A + AMP + diphosphate + H(+). Catalyzes the 2-thiolation of uridine at the wobble position (U34) of tRNA, leading to the formation of s(2)U34. The polypeptide is tRNA-specific 2-thiouridylase MnmA (Roseobacter denitrificans (strain ATCC 33942 / OCh 114) (Erythrobacter sp. (strain OCh 114))).